The primary structure comprises 198 residues: Ribonuclease HII (198 aa).

In terms of domain architecture, RNase H type-2 spans 10-198; sequence HLVAGVDEVG…PVKRALGLAS (189 aa). Residues D16, E17, and D108 each contribute to the a divalent metal cation site.

It belongs to the RNase HII family. Mn(2+) serves as cofactor. Mg(2+) is required as a cofactor.

The protein localises to the cytoplasm. The catalysed reaction is Endonucleolytic cleavage to 5'-phosphomonoester.. Endonuclease that specifically degrades the RNA of RNA-DNA hybrids. This Escherichia coli (strain ATCC 8739 / DSM 1576 / NBRC 3972 / NCIMB 8545 / WDCM 00012 / Crooks) protein is Ribonuclease HII.